The following is a 169-amino-acid chain: TPD1 protein homolog 1B (169 aa).

Positions 1 to 25 (MADCTTMRLASSVTIILLLLVASQA) are cleaved as a signal peptide.

Expressed in roots, and at low levels in anthers during meiosis.

Its function is as follows. May play a role during anther development. The protein is TPD1 protein homolog 1B of Oryza sativa subsp. japonica (Rice).